Reading from the N-terminus, the 432-residue chain is Probable protein phosphatase 2C 75 (432 aa).

The PPM-type phosphatase domain occupies 44 to 356 (VACLFTRQGK…DDCAVVCLFL (313 aa)). Residues aspartate 80, glycine 81, aspartate 301, and aspartate 347 each contribute to the Mn(2+) site. Residues 372 to 408 (SPRMPALSGITRPNSKRVTPDDVDDGSDSNVSGDERS) are disordered.

This sequence belongs to the PP2C family. Mg(2+) is required as a cofactor. Mn(2+) serves as cofactor.

The catalysed reaction is O-phospho-L-seryl-[protein] + H2O = L-seryl-[protein] + phosphate. It carries out the reaction O-phospho-L-threonyl-[protein] + H2O = L-threonyl-[protein] + phosphate. The protein is Probable protein phosphatase 2C 75 of Oryza sativa subsp. japonica (Rice).